Reading from the N-terminus, the 244-residue chain is Probable transcriptional regulatory protein DNO_1179 (244 aa).

This sequence belongs to the TACO1 family.

It localises to the cytoplasm. This is Probable transcriptional regulatory protein DNO_1179 from Dichelobacter nodosus (strain VCS1703A).